The following is a 316-amino-acid chain: Ferrochelatase (316 aa).

Fe cation is bound by residues His-188 and Glu-269.

It belongs to the ferrochelatase family.

It localises to the cytoplasm. It carries out the reaction heme b + 2 H(+) = protoporphyrin IX + Fe(2+). It participates in porphyrin-containing compound metabolism; protoheme biosynthesis; protoheme from protoporphyrin-IX: step 1/1. Functionally, catalyzes the ferrous insertion into protoporphyrin IX. The protein is Ferrochelatase of Wolinella succinogenes (strain ATCC 29543 / DSM 1740 / CCUG 13145 / JCM 31913 / LMG 7466 / NCTC 11488 / FDC 602W) (Vibrio succinogenes).